A 396-amino-acid polypeptide reads, in one-letter code: Acetate kinase (396 aa).

Position 8 (N8) interacts with Mg(2+). Position 15 (K15) interacts with ATP. R89 serves as a coordination point for substrate. Residue D146 is the Proton donor/acceptor of the active site. ATP contacts are provided by residues 206–210 (HLGNG), 280–282 (DMR), and 328–332 (GVGEN). E382 is a Mg(2+) binding site.

It belongs to the acetokinase family. In terms of assembly, homodimer. Mg(2+) is required as a cofactor. Requires Mn(2+) as cofactor.

The protein resides in the cytoplasm. It carries out the reaction acetate + ATP = acetyl phosphate + ADP. It participates in metabolic intermediate biosynthesis; acetyl-CoA biosynthesis; acetyl-CoA from acetate: step 1/2. In terms of biological role, catalyzes the formation of acetyl phosphate from acetate and ATP. Can also catalyze the reverse reaction. This chain is Acetate kinase, found in Clavibacter sepedonicus (Clavibacter michiganensis subsp. sepedonicus).